Reading from the N-terminus, the 312-residue chain is Plasminogen activator (312 aa).

Positions 1–20 (MKKSSIVATIITILSGSANA) are cleaved as a signal peptide. The Periplasmic portion of the chain corresponds to 21-31 (ASSQLIPNISP). The chain crosses the membrane as a beta stranded span at residues 32-40 (DSFTVAAST). The Extracellular segment spans residues 41–70 (GMLSGKSHEMLYDAETGRKISQLDWKIKNV). A beta stranded membrane pass occupies residues 71–80 (AILKGDISWD). At 81-84 (PYSF) the chain is on the periplasmic side. The beta stranded transmembrane segment at 85-94 (LTLNARGWTS) threads the bilayer. Residues 95–131 (LASGSGNMDDYDWMNENQSEWTDHSSHPATNVNHANE) are Extracellular-facing. Catalysis depends on residues Asp-104 and Asp-106. The chain crosses the membrane as a beta stranded span at residues 132-140 (YDLNVKGWL). The Periplasmic segment spans residues 141–145 (LQDEN). The beta stranded transmembrane segment at 146 to 154 (YKAGITAGY) threads the bilayer. Over 155-194 (QETRFSWTATGGSYSYNNGAYTGNFPKGVRVIGYNQRFSM) the chain is Extracellular. A beta stranded transmembrane segment spans residues 195-204 (PYIGLAGQYR). At 205–207 (IND) the chain is on the periplasmic side. The chain crosses the membrane as a beta stranded span at residues 208-216 (FELNALFKF). Over 217–244 (SDWVRAHDNDEHYMRDLTFREKTSGSRY) the chain is Extracellular. Catalysis depends on residues Asp-226 and His-228. Residues 245–255 (YGTVINAGYYV) traverse the membrane as a beta stranded segment. Residues 256–258 (TPN) are Periplasmic-facing. Residues 259–267 (AKVFAEFTY) traverse the membrane as a beta stranded segment. At 268–301 (SKYDEGKGGTQTIDKNSGDSVSIGGDAAGISNKN) the chain is on the extracellular side. A beta stranded membrane pass occupies residues 302–312 (YTVTAGLQYRF).

The protein belongs to the peptidase A26 family.

It localises to the cell outer membrane. The catalysed reaction is Converts human Glu-plasminogen to plasmin by cleaving the 560-Arg-|-Val-561 peptide bond that is also hydrolyzed by the mammalian u-plasminogen activator and t-plasminogen activator. Also cleaves arginyl bonds in other proteins.. Requires bacterial lipopolysaccharide (LPS) for activation; addition of LPS to inactive protein reactivates it. In the absence of LPS the active site groove is slightly narrower, and peptide substrate binds deep within the active site groove, displacing the nucleophilic water molecule. Its function is as follows. In the mammalian host activates (cleaves) plasminogen to generate the serine protease plasmin. Plasmin degrades fibrin clots (fibrinolysis) and facilitates bacterial cell migration, enabling rapid dissemination of bacteria from the initial site of infection. Cleaves host plasminogen to generate plasmin and probably also has autocatalytic activity. Fibrinolytic activity prevails at 37 degrees Celsius whereas coagulase expression predominates at lower temperatures (28 degrees Celsius). Cleaves plasminogen; plasminogen cleavage is much higher than coagulase activity. This Yersinia pestis protein is Plasminogen activator.